The chain runs to 235 residues: Large ribosomal subunit protein uL3 (235 aa).

Gln151 is subject to N5-methylglutamine.

The protein belongs to the universal ribosomal protein uL3 family. Part of the 50S ribosomal subunit. Forms a cluster with proteins L14 and L19. Post-translationally, methylated by PrmB.

Its function is as follows. One of the primary rRNA binding proteins, it binds directly near the 3'-end of the 23S rRNA, where it nucleates assembly of the 50S subunit. The protein is Large ribosomal subunit protein uL3 of Rhodospirillum rubrum (strain ATCC 11170 / ATH 1.1.1 / DSM 467 / LMG 4362 / NCIMB 8255 / S1).